Consider the following 231-residue polypeptide: uncharacterized protein (231 aa).

The region spanning 4–116 (RILVVEDDED…ELHARVIAQL (113 aa)) is the Response regulatory domain. The residue at position 52 (aspartate 52) is a 4-aspartylphosphate. Positions 129–230 (EETFLIGGKL…EWGRGYRFGA (102 aa)) form a DNA-binding region, ompR/PhoB-type.

In terms of processing, phosphorylated by YrkQ.

The protein localises to the cytoplasm. Member of the two-component regulatory system YrkQ/YrkP. This is an uncharacterized protein from Bacillus subtilis (strain 168).